A 164-amino-acid polypeptide reads, in one-letter code: Ubiquitin-fold modifier-conjugating enzyme 1 (164 aa).

Cysteine 116 acts as the Glycyl thioester intermediate in catalysis.

The protein belongs to the ubiquitin-conjugating enzyme family. UFC1 subfamily.

In terms of biological role, E2-like enzyme which forms an intermediate with UFM1 via a thioester linkage. The protein is Ubiquitin-fold modifier-conjugating enzyme 1 of Drosophila erecta (Fruit fly).